A 948-amino-acid chain; its full sequence is Phosphatidylinositol-glycan-specific phospholipase D (948 aa).

Residues 1–24 (MKNKIILLWLLLIVILCTISNVKG) form the signal peptide. Asparagine 39, asparagine 78, asparagine 148, asparagine 300, asparagine 433, asparagine 452, asparagine 506, and asparagine 535 each carry an N-linked (GlcNAc...) asparagine glycan. FG-GAP repeat units lie at residues 451 to 512 (TNFT…SVTI), 526 to 588 (QVAT…NPAG), 596 to 656 (LPSI…RISG), and 663 to 724 (DADY…LNSF). N-linked (GlcNAc...) asparagine glycans are attached at residues asparagine 749 and asparagine 788. 2 FG-GAP repeats span residues 799 to 861 (NLLL…LTND) and 895 to 948 (SSGG…NIFQ).

It belongs to the GPLD1 family. Requires Ca(2+) as cofactor.

The protein resides in the secreted. It catalyses the reaction a 6-(alpha-D-glucosaminyl)-1-(1,2-diacyl-sn-glycero-3-phospho)-1D-myo-inositol + H2O = 6-(alpha-D-glucosaminyl)-1D-myo-inositol + a 1,2-diacyl-sn-glycero-3-phosphate + H(+). Hydrolyzes the inositol phosphate linkage in proteins anchored by phosphatidylinositol glycans (GPI-anchor) thus releasing these proteins from the membrane. May also cleave GPI anchor intermediates intracellularly. In Dictyostelium discoideum (Social amoeba), this protein is Phosphatidylinositol-glycan-specific phospholipase D (pldG).